The chain runs to 195 residues: MAFVLSLLMALVLVSYGPGGSLGCDLSPNHVLVGRQNLRLLGQMRRLSPRFCLQDRKDFAFPQEMVEVSQFQEAQAISVLHEMLQQSFNLFHKERSSAAWDTTLLEQLLTGLHQQLDDLDACLGLLTGEEDSALGRTGPTLAMKRYFQGIHVYLQEKGYSDCAWEIVRLEIMRSLSSSTSLQERLRMMDGDLKSP.

An N-terminal signal peptide occupies residues 1 to 23 (MAFVLSLLMALVLVSYGPGGSLG). 2 disulfides stabilise this stretch: Cys24-Cys122 and Cys52-Cys162.

Belongs to the alpha/beta interferon family.

The protein localises to the secreted. In Bos taurus (Bovine), this protein is Interferon omega-1 (IFNW1).